The sequence spans 687 residues: MVTRKKPVKRNAEAAEIQVEQEEDASQPKVAKELMVVAQEVKIIRALACNDVVERNRQIRILRKWFKARAGSSFPFNEDDFMRIWKGLYYTMWMSDKPLVQEELAEKLAQMVDSFGGNTACSLAYFSAFMRTMCQEYFGIDQWRMDKFLMLTRRMVRYLLRFLKQNNWNADLIAAFNSSMQLSVMSEQPKSRGMTMHYLDVFFEELAKAANGEITAAQVNMFLRPFVTYIATQRDAKLVAQCRTRVLYHLMYQSDLGRQYSEKYNAWKQMGFPTASIDDIEKLDSGFDEEDDEVNAEEEQPRATSLDPRAGNVDVHMPELPLNADCVLDELQTQLRTNDFNSKRRKGLRKLIQIFETYQRGEFPLGVRTMPKVEGQTLSEMVEQKVAALDKMEDEVFATGRKLKKLNKSKRKRLLQSINFEEVDEHNYDEVISKALPPELQKKVNYNAKVRSSINNAWVVEEVKEAEPKSKKAKKEEPPQQNKDDQTKVKKKSQLKPKNDQSKPKIEDQPTLKAEKEEPAKRKKLDHSKTKEEQSKPKTDEQPKPTPKVEGQSKAKPTPKTKAAGVDDDAPTNGWDAPLEDGEQDIFVPSRKLQVKQANSKLPQSTPKQPARAEFATPQTGSGKHVRIVTKSNCIYPKSDYYRQLKLSPQVPYDANRLPGKSALKPHWIPGPIHPSYKAKRLFNDTL.

The segment covering 288-298 (DEEDDEVNAEE) has biased composition (acidic residues). Disordered regions lie at residues 288-312 (DEED…RAGN) and 463-624 (VKEA…GSGK). Composition is skewed to basic and acidic residues over residues 463-488 (VKEA…DQTK), 497-520 (PKND…EEPA), and 527-543 (HSKT…DEQP). Residues 554–564 (KAKPTPKTKAA) are compositionally biased toward low complexity. Over residues 596-608 (KQANSKLPQSTPK) the composition is skewed to polar residues. Phosphothreonine occurs at positions 617 and 620. A Phosphoserine modification is found at Ser-622.

Belongs to the RRP1 family.

The protein localises to the nucleus. May be involved in the generation of 28S rRNA. The chain is Ribosomal RNA processing protein 1 homolog (Nnp-1) from Drosophila melanogaster (Fruit fly).